A 1588-amino-acid polypeptide reads, in one-letter code: Pentafunctional AROM polypeptide (1588 aa).

A 3-dehydroquinate synthase region spans residues 1–392 (MVQLAKVPIL…YGDSAQFVSD (392 aa)). NAD(+)-binding positions include 43–45 (DTN), 78–81 (ETSK), 109–111 (GGV), and Asp-114. Arg-125 contacts 7-phospho-2-dehydro-3-deoxy-D-arabino-heptonate. Residue 134–135 (TS) participates in NAD(+) binding. 7-phospho-2-dehydro-3-deoxy-D-arabino-heptonate contacts are provided by Asp-141 and Lys-147. An NAD(+)-binding site is contributed by Lys-156. Asn-157 is a binding site for 7-phospho-2-dehydro-3-deoxy-D-arabino-heptonate. Residues 174-177 (WLET) and Asn-185 each bind NAD(+). Glu-189 serves as a coordination point for Zn(2+). 7-phospho-2-dehydro-3-deoxy-D-arabino-heptonate contacts are provided by residues 189–192 (EVIK) and Lys-258. The Proton acceptor; for 3-dehydroquinate synthase activity role is filled by Glu-268. Residues 272–276 (RNLLN) and His-279 contribute to the 7-phospho-2-dehydro-3-deoxy-D-arabino-heptonate site. Position 279 (His-279) interacts with Zn(2+). The active-site Proton acceptor; for 3-dehydroquinate synthase activity is the His-283. 2 residues coordinate 7-phospho-2-dehydro-3-deoxy-D-arabino-heptonate: His-295 and Lys-364. Position 295 (His-295) interacts with Zn(2+). Residues 405-871 (VYPFKDIPAD…WDVLHSELGA (467 aa)) form an EPSP synthase region. The active-site For EPSP synthase activity is the Cys-853. The segment at 890 to 1080 (SVVIIGMRAA…IPSGRSAFVC (191 aa)) is shikimate kinase. Residue 895–902 (GMRAAGKT) participates in ATP binding. Residues 1081–1293 (LTFDDLTEQT…AAPGQLTVAQ (213 aa)) form a 3-dehydroquinase region. His-1198 (proton acceptor; for 3-dehydroquinate dehydratase activity) is an active-site residue. Lys-1227 serves as the catalytic Schiff-base intermediate with substrate; for 3-dehydroquinate dehydratase activity. The segment at 1306–1588 (PKELFVVGKP…KAIFDAVTKE (283 aa)) is shikimate dehydrogenase.

It in the N-terminal section; belongs to the sugar phosphate cyclases superfamily. Dehydroquinate synthase family. In the 2nd section; belongs to the EPSP synthase family. The protein in the 3rd section; belongs to the shikimate kinase family. This sequence in the 4th section; belongs to the type-I 3-dehydroquinase family. It in the C-terminal section; belongs to the shikimate dehydrogenase family. Homodimer. Requires Zn(2+) as cofactor.

The protein resides in the cytoplasm. It catalyses the reaction 7-phospho-2-dehydro-3-deoxy-D-arabino-heptonate = 3-dehydroquinate + phosphate. It carries out the reaction 3-dehydroquinate = 3-dehydroshikimate + H2O. The catalysed reaction is shikimate + NADP(+) = 3-dehydroshikimate + NADPH + H(+). The enzyme catalyses shikimate + ATP = 3-phosphoshikimate + ADP + H(+). It catalyses the reaction 3-phosphoshikimate + phosphoenolpyruvate = 5-O-(1-carboxyvinyl)-3-phosphoshikimate + phosphate. It participates in metabolic intermediate biosynthesis; chorismate biosynthesis; chorismate from D-erythrose 4-phosphate and phosphoenolpyruvate: step 2/7. It functions in the pathway metabolic intermediate biosynthesis; chorismate biosynthesis; chorismate from D-erythrose 4-phosphate and phosphoenolpyruvate: step 3/7. Its pathway is metabolic intermediate biosynthesis; chorismate biosynthesis; chorismate from D-erythrose 4-phosphate and phosphoenolpyruvate: step 4/7. The protein operates within metabolic intermediate biosynthesis; chorismate biosynthesis; chorismate from D-erythrose 4-phosphate and phosphoenolpyruvate: step 5/7. It participates in metabolic intermediate biosynthesis; chorismate biosynthesis; chorismate from D-erythrose 4-phosphate and phosphoenolpyruvate: step 6/7. In terms of biological role, the AROM polypeptide catalyzes 5 consecutive enzymatic reactions in prechorismate polyaromatic amino acid biosynthesis. In Saccharomyces cerevisiae (strain JAY291) (Baker's yeast), this protein is Pentafunctional AROM polypeptide.